Reading from the N-terminus, the 207-residue chain is Dephospho-CoA kinase (207 aa).

The DPCK domain maps to 10–207; that stretch reads ILGLTGGIGS…FYLTLRGGQP (198 aa). 18–23 serves as a coordination point for ATP; the sequence is GSGKSA.

This sequence belongs to the CoaE family.

It localises to the cytoplasm. It carries out the reaction 3'-dephospho-CoA + ATP = ADP + CoA + H(+). It functions in the pathway cofactor biosynthesis; coenzyme A biosynthesis; CoA from (R)-pantothenate: step 5/5. In terms of biological role, catalyzes the phosphorylation of the 3'-hydroxyl group of dephosphocoenzyme A to form coenzyme A. This Pseudomonas putida (Arthrobacter siderocapsulatus) protein is Dephospho-CoA kinase.